The following is a 282-amino-acid chain: Probable endonuclease 4 (282 aa).

His-70, His-110, Glu-146, Asp-180, His-183, His-217, Asp-230, His-232, and Glu-262 together coordinate Zn(2+).

The protein belongs to the AP endonuclease 2 family. It depends on Zn(2+) as a cofactor.

It catalyses the reaction Endonucleolytic cleavage to 5'-phosphooligonucleotide end-products.. Endonuclease IV plays a role in DNA repair. It cleaves phosphodiester bonds at apurinic or apyrimidinic (AP) sites, generating a 3'-hydroxyl group and a 5'-terminal sugar phosphate. The polypeptide is Probable endonuclease 4 (Wolinella succinogenes (strain ATCC 29543 / DSM 1740 / CCUG 13145 / JCM 31913 / LMG 7466 / NCTC 11488 / FDC 602W) (Vibrio succinogenes)).